The chain runs to 578 residues: Polymerase acidic protein (578 aa).

The RNA polymerase is composed of three subunits: PB1, PB2 and PA. Phosphorylated on serines and threonines by host kinases.

Implicated in endonuclease cleavage of capped RNA primers. Displays an elongation factor activity in viral RNA synthesis. Dispensable for viral transcription, but not replication. This is Polymerase acidic protein from Infectious salmon anemia virus (isolate Atlantic salmon/Norway/810/9/99) (ISAV).